Consider the following 256-residue polypeptide: MEDTFKIGGRELTSRLFLGTGKFSSNRLIPEAVRASGAQVVTVALRRIDLEYEEENIAAYVPKDCILMPNTSGARNAQEAVRIARLARAAGCGNWVKIEVITDNRYLLPDNYETIKATEILAAEGFVVLPYMSPDLMVAKKLAEAGAAAVMPLGAPIGSNRGLRTKELVRILIDEIPLPIIVDAGLGRPSEAAEAMEMGAAAVLVNTAIATAGDPVAMARAFGLAVKAGRLAYLAGPGETQEYARASSPLTGFLRD.

Residue K97 is the Schiff-base intermediate with DXP of the active site. 1-deoxy-D-xylulose 5-phosphate contacts are provided by residues G158, 184-185 (AG), and 206-207 (NT).

This sequence belongs to the ThiG family. In terms of assembly, homotetramer. Forms heterodimers with either ThiH or ThiS.

Its subcellular location is the cytoplasm. It carries out the reaction [ThiS sulfur-carrier protein]-C-terminal-Gly-aminoethanethioate + 2-iminoacetate + 1-deoxy-D-xylulose 5-phosphate = [ThiS sulfur-carrier protein]-C-terminal Gly-Gly + 2-[(2R,5Z)-2-carboxy-4-methylthiazol-5(2H)-ylidene]ethyl phosphate + 2 H2O + H(+). It functions in the pathway cofactor biosynthesis; thiamine diphosphate biosynthesis. Functionally, catalyzes the rearrangement of 1-deoxy-D-xylulose 5-phosphate (DXP) to produce the thiazole phosphate moiety of thiamine. Sulfur is provided by the thiocarboxylate moiety of the carrier protein ThiS. In vitro, sulfur can be provided by H(2)S. The sequence is that of Thiazole synthase from Pelotomaculum thermopropionicum (strain DSM 13744 / JCM 10971 / SI).